A 269-amino-acid chain; its full sequence is Type II iodothyronine deiodinase (269 aa).

At Met-1–Leu-9 the chain is on the lumenal side. The chain crosses the membrane as a helical; Signal-anchor for type III membrane protein span at residues Ile-10–Leu-34. At Lys-35–Thr-269 the chain is on the cytoplasmic side. Residue Sec-133 is part of the active site. Residues Sec-133 and Sec-266 are each a non-standard amino acid (selenocysteine).

Belongs to the iodothyronine deiodinase family. As to quaternary structure, predominantly monomer. Can form homodimers but homodimerization is not essential for enzyme activity. Interacts with USP20 and USP33. Interacts with MARCHF6. Ubiquitinated by MARCHF6, leading to its degradation by the proteasome. Deubiquitinated by USP20 and USP33. More expressed in pituitary than in brain, low to undetectable levels in thyroid and skeletal muscle.

It localises to the endoplasmic reticulum membrane. The enzyme catalyses 3,3',5-triiodo-L-thyronine + iodide + A + H(+) = L-thyroxine + AH2. It catalyses the reaction 3,3'-diiodo-L-thyronine + iodide + A + H(+) = 3,3',5'-triiodo-L-thyronine + AH2. It carries out the reaction 3'-iodo-L-thyronine + iodide + A + H(+) = 3',5'-diiodo-L-thyronine + AH2. The catalysed reaction is 3,3'-diiodothyronamine + iodide + A + H(+) = 3,3',5'-triiodothyronamine + AH2. The enzyme catalyses 3'-iodothyronamine + iodide + A + H(+) = 3',5'-diiodothyronamine + AH2. Functionally, plays a crucial role in the metabolism of thyroid hormones (TH) and has specific roles in TH activation and inactivation by deiodination.Catalyzes the deiodination of L-thyroxine (T4) to 3,5,3'-triiodothyronine (T3) and 3,3',5'-triiodothyronine (rT3) to 3,3'-diiodothyronine (3,3'-T2) via outer-ring deiodination (ORD). Catalyzes the deiodination of 3',5'-diiodothyronine (3',5'-T2) to 3'-monoiodothyronine (3'-T1) via ORD. Catalyzes the phenolic ring deiodinations of 3,3',5'-triiodothyronamine and 3',5'- diiodothyronamine. This Sus scrofa (Pig) protein is Type II iodothyronine deiodinase (DIO2).